The primary structure comprises 353 residues: Methylthioribose-1-phosphate isomerase (353 aa).

Substrate-binding positions include Arg-51–Ala-53, Arg-94, and Gln-203. Residue Asp-244 is the Proton donor of the active site. Residue Asn-254–Lys-255 participates in substrate binding.

It belongs to the eIF-2B alpha/beta/delta subunits family. MtnA subfamily.

It carries out the reaction 5-(methylsulfanyl)-alpha-D-ribose 1-phosphate = 5-(methylsulfanyl)-D-ribulose 1-phosphate. Its pathway is amino-acid biosynthesis; L-methionine biosynthesis via salvage pathway; L-methionine from S-methyl-5-thio-alpha-D-ribose 1-phosphate: step 1/6. Catalyzes the interconversion of methylthioribose-1-phosphate (MTR-1-P) into methylthioribulose-1-phosphate (MTRu-1-P). The sequence is that of Methylthioribose-1-phosphate isomerase from Nostoc punctiforme (strain ATCC 29133 / PCC 73102).